The sequence spans 158 residues: NAD(P)H-quinone oxidoreductase subunit J, chloroplastic (158 aa).

It belongs to the complex I 30 kDa subunit family. As to quaternary structure, NDH is composed of at least 16 different subunits, 5 of which are encoded in the nucleus.

The protein resides in the plastid. Its subcellular location is the chloroplast thylakoid membrane. It catalyses the reaction a plastoquinone + NADH + (n+1) H(+)(in) = a plastoquinol + NAD(+) + n H(+)(out). The catalysed reaction is a plastoquinone + NADPH + (n+1) H(+)(in) = a plastoquinol + NADP(+) + n H(+)(out). NDH shuttles electrons from NAD(P)H:plastoquinone, via FMN and iron-sulfur (Fe-S) centers, to quinones in the photosynthetic chain and possibly in a chloroplast respiratory chain. The immediate electron acceptor for the enzyme in this species is believed to be plastoquinone. Couples the redox reaction to proton translocation, and thus conserves the redox energy in a proton gradient. The protein is NAD(P)H-quinone oxidoreductase subunit J, chloroplastic of Solanum lycopersicum (Tomato).